A 415-amino-acid polypeptide reads, in one-letter code: 3-isopropylmalate dehydratase large subunit (415 aa).

[4Fe-4S] cluster is bound by residues C297, C355, and C358.

This sequence belongs to the aconitase/IPM isomerase family. LeuC type 2 subfamily. In terms of assembly, heterodimer of LeuC and LeuD. [4Fe-4S] cluster serves as cofactor.

It carries out the reaction (2R,3S)-3-isopropylmalate = (2S)-2-isopropylmalate. It participates in amino-acid biosynthesis; L-leucine biosynthesis; L-leucine from 3-methyl-2-oxobutanoate: step 2/4. Catalyzes the isomerization between 2-isopropylmalate and 3-isopropylmalate, via the formation of 2-isopropylmaleate. The protein is 3-isopropylmalate dehydratase large subunit of Caldivirga maquilingensis (strain ATCC 700844 / DSM 13496 / JCM 10307 / IC-167).